The sequence spans 333 residues: Probable ABC transporter permease protein y4mJ (333 aa).

10 consecutive transmembrane segments (helical) span residues L30–A50, A62–I82, L84–G104, A110–V130, L133–V153, I175–F195, F228–I248, S253–S273, L274–I294, and L300–V320.

This sequence belongs to the binding-protein-dependent transport system permease family. AraH/RbsC subfamily.

It localises to the cell inner membrane. Its function is as follows. Probably part of the binding-protein-dependent transport system y4mIJK. This system probably transports a sugar. Probably responsible for the translocation of the substrate across the membrane. This chain is Probable ABC transporter permease protein y4mJ, found in Sinorhizobium fredii (strain NBRC 101917 / NGR234).